The following is a 252-amino-acid chain: Probable transcriptional regulatory protein Ava_1228 (252 aa).

It belongs to the TACO1 family.

Its subcellular location is the cytoplasm. The protein is Probable transcriptional regulatory protein Ava_1228 of Trichormus variabilis (strain ATCC 29413 / PCC 7937) (Anabaena variabilis).